Here is a 154-residue protein sequence, read N- to C-terminus: Endoribonuclease YbeY (154 aa).

His-114, His-118, and His-124 together coordinate Zn(2+).

It belongs to the endoribonuclease YbeY family. The cofactor is Zn(2+).

It is found in the cytoplasm. Its function is as follows. Single strand-specific metallo-endoribonuclease involved in late-stage 70S ribosome quality control and in maturation of the 3' terminus of the 16S rRNA. In Marinomonas sp. (strain MWYL1), this protein is Endoribonuclease YbeY.